The chain runs to 444 residues: Phosphomethylpyrimidine synthase (444 aa).

Substrate contacts are provided by residues Asn80, Met109, Tyr138, His174, 194 to 196 (SRG), 235 to 238 (DSLR), and Glu274. Residue His278 participates in Zn(2+) binding. Tyr301 contributes to the substrate binding site. A Zn(2+)-binding site is contributed by His342. 3 residues coordinate [4Fe-4S] cluster: Cys422, Cys425, and Cys430.

This sequence belongs to the ThiC family. As to quaternary structure, homodimer. [4Fe-4S] cluster is required as a cofactor.

The enzyme catalyses 5-amino-1-(5-phospho-beta-D-ribosyl)imidazole + S-adenosyl-L-methionine = 4-amino-2-methyl-5-(phosphooxymethyl)pyrimidine + CO + 5'-deoxyadenosine + formate + L-methionine + 3 H(+). The protein operates within cofactor biosynthesis; thiamine diphosphate biosynthesis. Its function is as follows. Catalyzes the synthesis of the hydroxymethylpyrimidine phosphate (HMP-P) moiety of thiamine from aminoimidazole ribotide (AIR) in a radical S-adenosyl-L-methionine (SAM)-dependent reaction. The protein is Phosphomethylpyrimidine synthase of Nitratiruptor sp. (strain SB155-2).